The sequence spans 407 residues: Peptidase T (407 aa).

Position 82 (H82) interacts with Zn(2+). D84 is an active-site residue. D143 provides a ligand contact to Zn(2+). E177 functions as the Proton acceptor in the catalytic mechanism. Zn(2+) contacts are provided by E178, D200, and H382.

It belongs to the peptidase M20B family. Requires Zn(2+) as cofactor.

Its subcellular location is the cytoplasm. It carries out the reaction Release of the N-terminal residue from a tripeptide.. Cleaves the N-terminal amino acid of tripeptides. In Streptococcus pyogenes serotype M4 (strain MGAS10750), this protein is Peptidase T.